Here is a 499-residue protein sequence, read N- to C-terminus: Apolipoprotein N-acyltransferase (499 aa).

6 helical membrane passes run 9-29 (LLLG…PALL), 50-70 (LGYI…SIGV), 77-97 (FWWA…FFVS), 114-134 (FIFC…FTGL), 148-168 (ILIQ…VIYI), and 183-203 (LKVL…YGSV). Residues 220–464 (VQPSIPQTEK…DGLIPKKLDS (245 aa)) enclose the CN hydrolase domain. E259 acts as the Proton acceptor in catalysis. K322 is an active-site residue. The Nucleophile role is filled by C372. The chain crosses the membrane as a helical span at residues 466 to 486 (TIFSKFGNITILLIVFFIFLV).

This sequence belongs to the CN hydrolase family. Apolipoprotein N-acyltransferase subfamily.

The protein localises to the cell inner membrane. It carries out the reaction N-terminal S-1,2-diacyl-sn-glyceryl-L-cysteinyl-[lipoprotein] + a glycerophospholipid = N-acyl-S-1,2-diacyl-sn-glyceryl-L-cysteinyl-[lipoprotein] + a 2-acyl-sn-glycero-3-phospholipid + H(+). It participates in protein modification; lipoprotein biosynthesis (N-acyl transfer). Functionally, catalyzes the phospholipid dependent N-acylation of the N-terminal cysteine of apolipoprotein, the last step in lipoprotein maturation. In Rickettsia bellii (strain RML369-C), this protein is Apolipoprotein N-acyltransferase.